The following is a 417-amino-acid chain: Testis-specific Y-encoded-like protein 5 (417 aa).

The span at 1–25 (MSGRSRGRKSSRAKNRGKGRAKARV) shows a compositional bias: basic residues. Disordered regions lie at residues 1–55 (MSGR…QVQA), 93–112 (AAGDHGQAAARPGPGKAASL), 127–202 (GTVG…EGSM), and 391–417 (KGKEKEGRQGPGKQPMETTQPGVSQSN). Residues 27 to 37 (PAPDDAPRDPD) show a composition bias toward basic and acidic residues. Positions 93–103 (AAGDHGQAAAR) are enriched in low complexity. Residues 182 to 191 (GEEKKEERDA) show a composition bias toward basic and acidic residues. Polar residues predominate over residues 406-417 (METTQPGVSQSN).

This sequence belongs to the nucleosome assembly protein (NAP) family. In terms of assembly, interacts with USP7.

Functionally, involved in modulation of cell growth and cellular response to gamma radiation probably via regulation of the Akt signaling pathway. Involved in regulation of p53/TP53. Suppresses p53/TP53 protein levels and promotes its ubiquitination; the function is dependent on USP7 and independent on MDM2. Proposed to displace p53/TP53 from interaction with USP7. In Homo sapiens (Human), this protein is Testis-specific Y-encoded-like protein 5 (TSPYL5).